An 89-amino-acid polypeptide reads, in one-letter code: Elongation factor 1-beta (89 aa).

Belongs to the EF-1-beta/EF-1-delta family.

Its function is as follows. Promotes the exchange of GDP for GTP in EF-1-alpha/GDP, thus allowing the regeneration of EF-1-alpha/GTP that could then be used to form the ternary complex EF-1-alpha/GTP/AAtRNA. The protein is Elongation factor 1-beta (ef1b) of Methanocaldococcus jannaschii (strain ATCC 43067 / DSM 2661 / JAL-1 / JCM 10045 / NBRC 100440) (Methanococcus jannaschii).